A 472-amino-acid chain; its full sequence is MTVETFKPKQTTTLDTPAKRLEAASTNAVTTGNRIGFVSLGCPKNLVDSERILTQLRIDGYEVTNSYDNADLVIVNTCGFIDAAVEESLDAVREALEENGKVIVTGCLGAKENQIREVYPDVLEITGPHSYEAVLKHVHKYVPKPEHNPFTSLIPQTGVKLTPKHYAYLKISEGCDNRCTFCIIPSLRGDLNSRPAGSILDEAKRLVESGVQEILVVSQDTSAYGKDKSGRTDFWDGMPVKQDITSLARQLGKMGAWVRLHYIYPYPWVDDLIPLMAEGLILPYLDIPMQHASPRILKMMKRPGRVDRQLEAIQRWREICPDLVIRSTFIVGFPGETEEDFQILLDFLKEARLDRVGCFKYSEVDGAVANTIAELISEDVKEDRYHRFMELQAEISAERLARFVGRTLDILIDDVDEEGAIGRSFADAPEIDGMVFINGETELEPGMLVRARITHSDEHDLWAEVVDADTQD.

An MTTase N-terminal domain is found at 33-143 (NRIGFVSLGC…VLKHVHKYVP (111 aa)). 6 residues coordinate [4Fe-4S] cluster: Cys42, Cys78, Cys107, Cys175, Cys179, and Cys182. Residues 161–398 (LTPKHYAYLK…MELQAEISAE (238 aa)) enclose the Radical SAM core domain. The 67-residue stretch at 401–467 (ARFVGRTLDI…EHDLWAEVVD (67 aa)) folds into the TRAM domain.

It belongs to the methylthiotransferase family. RimO subfamily. The cofactor is [4Fe-4S] cluster.

It is found in the cytoplasm. It carries out the reaction L-aspartate(89)-[ribosomal protein uS12]-hydrogen + (sulfur carrier)-SH + AH2 + 2 S-adenosyl-L-methionine = 3-methylsulfanyl-L-aspartate(89)-[ribosomal protein uS12]-hydrogen + (sulfur carrier)-H + 5'-deoxyadenosine + L-methionine + A + S-adenosyl-L-homocysteine + 2 H(+). In terms of biological role, catalyzes the methylthiolation of an aspartic acid residue of ribosomal protein uS12. The chain is Ribosomal protein uS12 methylthiotransferase RimO from Shewanella putrefaciens (strain CN-32 / ATCC BAA-453).